The primary structure comprises 403 residues: Exodeoxyribonuclease 7 large subunit (403 aa).

The protein belongs to the XseA family. Heterooligomer composed of large and small subunits.

It is found in the cytoplasm. It carries out the reaction Exonucleolytic cleavage in either 5'- to 3'- or 3'- to 5'-direction to yield nucleoside 5'-phosphates.. Its function is as follows. Bidirectionally degrades single-stranded DNA into large acid-insoluble oligonucleotides, which are then degraded further into small acid-soluble oligonucleotides. This Clostridium botulinum (strain Okra / Type B1) protein is Exodeoxyribonuclease 7 large subunit.